The following is a 95-amino-acid chain: Cell division topological specificity factor (95 aa).

It belongs to the MinE family.

Functionally, prevents the cell division inhibition by proteins MinC and MinD at internal division sites while permitting inhibition at polar sites. This ensures cell division at the proper site by restricting the formation of a division septum at the midpoint of the long axis of the cell. This is Cell division topological specificity factor from Methylorubrum extorquens (strain CM4 / NCIMB 13688) (Methylobacterium extorquens).